The primary structure comprises 738 residues: 1,4-alpha-glucan branching enzyme GlgB (738 aa).

D417 (nucleophile) is an active-site residue. The active-site Proton donor is E472.

It belongs to the glycosyl hydrolase 13 family. GlgB subfamily. In terms of assembly, monomer.

The catalysed reaction is Transfers a segment of a (1-&gt;4)-alpha-D-glucan chain to a primary hydroxy group in a similar glucan chain.. Its pathway is glycan biosynthesis; glycogen biosynthesis. In terms of biological role, catalyzes the formation of the alpha-1,6-glucosidic linkages in glycogen by scission of a 1,4-alpha-linked oligosaccharide from growing alpha-1,4-glucan chains and the subsequent attachment of the oligosaccharide to the alpha-1,6 position. In Burkholderia pseudomallei (strain K96243), this protein is 1,4-alpha-glucan branching enzyme GlgB.